Consider the following 155-residue polypeptide: Endoribonuclease YbeY (155 aa).

Residues H120, H124, and H130 each coordinate Zn(2+).

Belongs to the endoribonuclease YbeY family. Zn(2+) serves as cofactor.

The protein localises to the cytoplasm. Single strand-specific metallo-endoribonuclease involved in late-stage 70S ribosome quality control and in maturation of the 3' terminus of the 16S rRNA. The protein is Endoribonuclease YbeY of Staphylococcus aureus (strain Mu3 / ATCC 700698).